The chain runs to 180 residues: Hypoxanthine-guanine phosphoribosyltransferase (180 aa).

Residues lysine 43 and glycine 44 each coordinate diphosphate. The Mg(2+) site is built by glutamate 99 and aspartate 100. Aspartate 103 functions as the Proton acceptor in the catalytic mechanism. Residues lysine 131, 152-153, and aspartate 159 each bind GMP; that span reads FI. Position 165 (arginine 165) interacts with diphosphate.

Belongs to the purine/pyrimidine phosphoribosyltransferase family. It depends on Mg(2+) as a cofactor.

It is found in the cytoplasm. It catalyses the reaction IMP + diphosphate = hypoxanthine + 5-phospho-alpha-D-ribose 1-diphosphate. The enzyme catalyses GMP + diphosphate = guanine + 5-phospho-alpha-D-ribose 1-diphosphate. Its pathway is purine metabolism; IMP biosynthesis via salvage pathway; IMP from hypoxanthine: step 1/1. It participates in purine metabolism; GMP biosynthesis via salvage pathway; GMP from guanine: step 1/1. In terms of biological role, purine salvage pathway enzyme that catalyzes the transfer of the ribosyl-5-phosphate group from 5-phospho-alpha-D-ribose 1-diphosphate (PRPP) to the N9 position of the 6-oxopurines hypoxanthine and guanine to form the corresponding ribonucleotides IMP (inosine 5'-monophosphate) and GMP (guanosine 5'-monophosphate), with the release of PPi. This is Hypoxanthine-guanine phosphoribosyltransferase (hpt) from Streptococcus pyogenes serotype M3 (strain ATCC BAA-595 / MGAS315).